We begin with the raw amino-acid sequence, 427 residues long: 3-isopropylmalate dehydratase large subunit (427 aa).

C308, C368, and C371 together coordinate [4Fe-4S] cluster.

The protein belongs to the aconitase/IPM isomerase family. LeuC type 2 subfamily. As to quaternary structure, heterodimer of LeuC and LeuD. The cofactor is [4Fe-4S] cluster.

The catalysed reaction is (2R,3S)-3-isopropylmalate = (2S)-2-isopropylmalate. The protein operates within amino-acid biosynthesis; L-leucine biosynthesis; L-leucine from 3-methyl-2-oxobutanoate: step 2/4. In terms of biological role, catalyzes the isomerization between 2-isopropylmalate and 3-isopropylmalate, via the formation of 2-isopropylmaleate. In Geotalea uraniireducens (strain Rf4) (Geobacter uraniireducens), this protein is 3-isopropylmalate dehydratase large subunit.